A 203-amino-acid polypeptide reads, in one-letter code: Holliday junction branch migration complex subunit RuvA (203 aa).

The interval 1 to 63 is domain I; that stretch reads MIGKLSGRVD…EDHINLYGFL (63 aa). The domain II stretch occupies residues 64–142; that stretch reads SLEEKSFFNL…KISSSSAAIK (79 aa). A flexible linker region spans residues 143 to 149; the sequence is DSLNIKG. The tract at residues 150 to 203 is domain III; sequence ITPVASSEVIKALINMGFSRFEAQNAVQEIITKNPEISIDELIRTALKNRNSNF.

Belongs to the RuvA family. As to quaternary structure, homotetramer. Forms an RuvA(8)-RuvB(12)-Holliday junction (HJ) complex. HJ DNA is sandwiched between 2 RuvA tetramers; dsDNA enters through RuvA and exits via RuvB. An RuvB hexamer assembles on each DNA strand where it exits the tetramer. Each RuvB hexamer is contacted by two RuvA subunits (via domain III) on 2 adjacent RuvB subunits; this complex drives branch migration. In the full resolvosome a probable DNA-RuvA(4)-RuvB(12)-RuvC(2) complex forms which resolves the HJ.

It localises to the cytoplasm. Its function is as follows. The RuvA-RuvB-RuvC complex processes Holliday junction (HJ) DNA during genetic recombination and DNA repair, while the RuvA-RuvB complex plays an important role in the rescue of blocked DNA replication forks via replication fork reversal (RFR). RuvA specifically binds to HJ cruciform DNA, conferring on it an open structure. The RuvB hexamer acts as an ATP-dependent pump, pulling dsDNA into and through the RuvAB complex. HJ branch migration allows RuvC to scan DNA until it finds its consensus sequence, where it cleaves and resolves the cruciform DNA. The sequence is that of Holliday junction branch migration complex subunit RuvA from Rickettsia bellii (strain OSU 85-389).